The chain runs to 514 residues: Transmembrane protein 117 (514 aa).

Residues 1-15 (MGKDFRYYFQHPWSR) are Cytoplasmic-facing. A helical transmembrane segment spans residues 16–36 (MIVAYLVIFFNFLIFAEDPVS). Topologically, residues 37–65 (HSQTEANVIVVGNCFSFVTNKYPRGVGWR) are extracellular. A helical membrane pass occupies residues 66–86 (ILKVLLWLLAILTGLIAGKFL). The Cytoplasmic portion of the chain corresponds to 87 to 110 (FHQRLFGQLLRLKMFREDHGSWMT). The chain crosses the membrane as a helical span at residues 111 to 131 (MFFSTILFLFIFSHIYNTILL). Residues 132-154 (MDGNMGAYIITDYMGIRNESFMK) lie on the Extracellular side of the membrane. A helical transmembrane segment spans residues 155–175 (LAAVGTWMGDFVTAWMVTDMM). At 176 to 198 (LQDKPYPDWGKSARAFWKKGNVR) the chain is on the cytoplasmic side. Residues 199-219 (ITLFWTVLFTLTSVVVLVITT) traverse the membrane as a helical segment. Over 220-239 (DWISWDKLNRGFLPSDEVSR) the chain is Extracellular. A helical transmembrane segment spans residues 240–260 (AFLASFILVFDLLIVMQDWEF). Residues 261–295 (PHFMGDVDVNLPGLHTPHMQFKIPFFQKIFKEEYR) lie on the Cytoplasmic side of the membrane. A helical membrane pass occupies residues 296–316 (IHITGKWFNYGIIFLVLILDL). At 317-394 (NMWKNQIFYK…FIGASLDVKC (78 aa)) the chain is on the extracellular side. N-linked (GlcNAc...) asparagine glycosylation is found at N353 and N371. Residues 395 to 415 (LAFVPSLIAFVWFGFFIWFFG) form a helical membrane-spanning segment. The Cytoplasmic portion of the chain corresponds to 416–514 (RFLKNEPRME…PTTSKSTPTN (99 aa)). Disordered regions lie at residues 429–459 (KTYT…SVED) and 486–514 (ENLS…TPTN). The span at 438 to 448 (SPSEHSKDMGI) shows a compositional bias: basic and acidic residues. T453 carries the post-translational modification Phosphothreonine.

The protein belongs to the TMEM117 family.

It is found in the cell membrane. Involved in endoplasmic reticulum (ER) stress-induced cell death pathway. The protein is Transmembrane protein 117 (TMEM117) of Homo sapiens (Human).